The primary structure comprises 118 residues: Endoribonuclease MazF9 (118 aa).

It belongs to the PemK/MazF family. In terms of assembly, forms a complex with cognate antitoxin MazE9.

Its function is as follows. Toxic component of a type II toxin-antitoxin (TA) system. Upon expression in E.coli and M.smegmatis inhibits cell growth and colony formation. Its toxic effect is neutralized by coexpression with cognate antitoxin MazE9. Acts as an mRNA interferase, specifically cleaving between U and C in UAC sequences. May cleave its cognate antitoxin's gene. In E.coli expression with non-cognate antitoxins VapB27 and VapB40 partially neutralizes the toxin. In Mycobacterium tuberculosis (strain ATCC 25618 / H37Rv), this protein is Endoribonuclease MazF9 (mazF9).